Here is a 159-residue protein sequence, read N- to C-terminus: MGGLKKPKKKYLAGKPKKIWNKQLLLEELQLMGEYGLRNKKELWLARARLKWIVRRARALLSMTAEERAPLEVPFKEKLYKMGFIEDPNVPLDRILSLDVRAILERRLQTLVFRMGLAKSIHHARQLVVHGHVLVAGRRVTSPGFLVPRELEDKITIEQ.

In terms of domain architecture, S4 RNA-binding spans 106–158 (RRLQTLVFRMGLAKSIHHARQLVVHGHVLVAGRRVTSPGFLVPRELEDKITIE).

The protein belongs to the universal ribosomal protein uS4 family. Part of the 30S ribosomal subunit. Contacts protein S5. The interaction surface between S4 and S5 is involved in control of translational fidelity.

Its function is as follows. One of the primary rRNA binding proteins, it binds directly to 16S rRNA where it nucleates assembly of the body of the 30S subunit. In terms of biological role, with S5 and S12 plays an important role in translational accuracy. In Pyrobaculum calidifontis (strain DSM 21063 / JCM 11548 / VA1), this protein is Small ribosomal subunit protein uS4.